The chain runs to 102 residues: UPF0473 protein SAS1551 (102 aa).

This sequence belongs to the UPF0473 family.

The polypeptide is UPF0473 protein SAS1551 (Staphylococcus aureus (strain MSSA476)).